A 529-amino-acid chain; its full sequence is Type I restriction enzyme StySPI methylase subunit (529 aa).

S-adenosyl-L-methionine contacts are provided by residues 148–153, 178–180, and Glu-216; these read QYFTPR and TAG. Residues 424-443 form a disordered region; sequence AEESEVADSEENKNADQHQA.

It belongs to the N(4)/N(6)-methyltransferase family. As to quaternary structure, the type I restriction/modification system is composed of three polypeptides R, M and S; the restriction enzyme has stoichiometry R(2)M(2)S(1) while the methyltransferase is M(2)S(1).

It catalyses the reaction a 2'-deoxyadenosine in DNA + S-adenosyl-L-methionine = an N(6)-methyl-2'-deoxyadenosine in DNA + S-adenosyl-L-homocysteine + H(+). In terms of biological role, the subtype gamma methyltransferase (M) subunit of a type I restriction enzyme. The M and S subunits together form a methyltransferase (MTase) that methylates A-2 on the top strand and A-3 on the bottom strand of the sequence 5'-AACN(6)GTRC-3'. In the presence of the R subunit the complex can also act as an endonuclease, binding to the same target sequence but cutting the DNA some distance from this site. Whether the DNA is cut or modified depends on the methylation state of the target sequence. When the target site is unmodified, the DNA is cut. When the target site is hemimethylated, the complex acts as a maintenance MTase modifying the DNA so that both strands become methylated. After locating a non-methylated recognition site, the enzyme complex serves as a molecular motor that translocates DNA in an ATP-dependent manner until a collision occurs that triggers cleavage. The polypeptide is Type I restriction enzyme StySPI methylase subunit (Salmonella potsdam).